A 609-amino-acid chain; its full sequence is UvrABC system protein C (609 aa).

Residues 16–94 form the GIY-YIG domain; that stretch reads SSAGVYRMYD…IKQYMPKYNV (79 aa). The region spanning 203-238 is the UVR domain; sequence QQVISTLVAKMEQAAQQQEYEQAARFRDQIMALRKV.

It belongs to the UvrC family. Interacts with UvrB in an incision complex.

The protein localises to the cytoplasm. Its function is as follows. The UvrABC repair system catalyzes the recognition and processing of DNA lesions. UvrC both incises the 5' and 3' sides of the lesion. The N-terminal half is responsible for the 3' incision and the C-terminal half is responsible for the 5' incision. The polypeptide is UvrABC system protein C (Shewanella putrefaciens (strain CN-32 / ATCC BAA-453)).